The following is a 140-amino-acid chain: Ubiquitin-like protein ATG12 (140 aa).

Residues 1–52 form a disordered region; that stretch reads MAEEPQTVLQLPPSSAAGGEGLTDVSPETTTPEPPSSAAVSPGTEEPAGDTK. Residues 25 to 42 show a composition bias toward low complexity; it reads VSPETTTPEPPSSAAVSP. Residue Gly-140 forms a Glycyl lysine isopeptide (Gly-Lys) (interchain with K-? in acceptor protein) linkage.

The protein belongs to the ATG12 family. As to quaternary structure, forms a conjugate with ATG5. Part of the minor complex composed of 4 sets of ATG12-ATG5 and ATG16L1 (400 kDa); this complex interacts with ATG3 leading to disruption of ATG7 interaction and promotion of ATG8-like proteins lipidation. Forms an 800-kDa complex composed of ATG12-ATG5 and ATG16L2. Interacts with DHX58/RIG-1, IFIH1/MDA5 and MAVS/IPS-1 in monomeric form as well as in ATG12-ATG5 conjugate. The interaction with MAVS is further enhanced upon vesicular stomatitis virus (VSV) infection. Interacts with ATG3; this interaction is essential for phosphatidylethanolamine (PE)-conjugated ATG8-like proteins formation. Interacts with ATG7. Interacts with ATG10. Interacts with TECPR1. Interacts with SH3BGRL. The ATG12-ATG5 conjugate interacts with PDCD6IP (via the BRO1 domain); this interaction is bridged by ATG12 and promotes multiple PDCD6IP-mediated functions such as endolysosomal trafficking, macroautophagy and exosome biogenesis. Acetylated by EP300.

The protein localises to the cytoplasm. It localises to the preautophagosomal structure membrane. Functionally, ubiquitin-like protein involved in autophagy vesicles formation. Conjugation with ATG5 through a ubiquitin-like conjugating system involving also ATG7 as an E1-like activating enzyme and ATG10 as an E2-like conjugating enzyme, is essential for its function. The ATG12-ATG5 conjugate acts as an E3-like enzyme which is required for lipidation of ATG8 family proteins and their association to the vesicle membranes. The ATG12-ATG5 conjugate also negatively regulates the innate antiviral immune response by blocking the type I IFN production pathway through direct association with RARRES3 and MAVS. Also plays a role in translation or delivery of incoming viral RNA to the translation apparatus. As part of the ATG8 conjugation system with ATG5 and ATG16L1, required for recruitment of LRRK2 to stressed lysosomes and induction of LRRK2 kinase activity in response to lysosomal stress. This Pongo abelii (Sumatran orangutan) protein is Ubiquitin-like protein ATG12.